Reading from the N-terminus, the 196-residue chain is MQERIKACFTESIQTQIAAAEALPDAISRAAMTLVQSLLNGNKILCCGNGTSAANAQHFAASMINRFETERPSLPAIALNTDNVVLTAIANDRLHDEVYAKQVRALGHAGDVLLAISTRGNSRDIVKAVEAAVTRDMTIVALTGYDGGELAGLLGPQDVEIRIPSHRSARIQEMHMLTVNCLCDLIDNTLFPHQDV.

One can recognise an SIS domain in the interval 34 to 196 (LVQSLLNGNK…DNTLFPHQDV (163 aa)).

The protein belongs to the SIS family. DiaA subfamily. In terms of assembly, homotetramer; dimer of dimers.

Required for the timely initiation of chromosomal replication via direct interactions with the DnaA initiator protein. This Escherichia coli O6:K15:H31 (strain 536 / UPEC) protein is DnaA initiator-associating protein DiaA.